Consider the following 150-residue polypeptide: MSVNDYSLFDEATDELVSSERKLIAVDCHDDDSQVINVKVEDIFCDMSDKVVLKLQFRLCYKYRKLLDITLLGCRMKVYTELKTPSERSLKSILQKKMNIISDGNYLIGIRMFFININQLINTCKWITRIEDVYPICTLYHVNNTPVIDI.

This sequence belongs to the nanovirus U1 protein family.

The chain is Protein U1 (DNA-U1) from Astragalus sinicus (Chinese milk vetch).